Here is a 419-residue protein sequence, read N- to C-terminus: uncharacterized protein (419 aa).

The next 11 helical transmembrane spans lie at methionine 1–leucine 21, valine 24–aspartate 44, isoleucine 66–threonine 86, alanine 101–isoleucine 121, serine 174–alanine 194, asparagine 216–leucine 236, isoleucine 242–glycine 262, proline 280–leucine 300, serine 311–alanine 331, leucine 349–phenylalanine 369, and isoleucine 396–valine 416.

Belongs to the CitM (TC 2.A.11) transporter family.

It is found in the cell membrane. This is an uncharacterized protein from Haemophilus influenzae (strain ATCC 51907 / DSM 11121 / KW20 / Rd).